The chain runs to 189 residues: Photosystem I assembly protein Ycf4 (189 aa).

2 helical membrane passes run 25-45 (SVYF…LAGL) and 62-82 (LVFI…SLAG).

It belongs to the Ycf4 family.

It localises to the cellular thylakoid membrane. Functionally, seems to be required for the assembly of the photosystem I complex. In Synechococcus sp. (strain JA-3-3Ab) (Cyanobacteria bacterium Yellowstone A-Prime), this protein is Photosystem I assembly protein Ycf4.